We begin with the raw amino-acid sequence, 121 residues long: Trypsin/alpha-amylase inhibitor CMX1/CMX3 (121 aa).

The N-terminal stretch at 1–24 is a signal peptide; it reads MAFKHQLILSTAILLAVLAAASAS.

The protein belongs to the protease inhibitor I6 (cereal trypsin/alpha-amylase inhibitor) family.

The protein resides in the secreted. The sequence is that of Trypsin/alpha-amylase inhibitor CMX1/CMX3 from Triticum aestivum (Wheat).